Here is a 470-residue protein sequence, read N- to C-terminus: Cysteine--tRNA ligase (470 aa).

Cys31 lines the Zn(2+) pocket. Positions 33–43 (PTVYDYVHIGH) match the 'HIGH' region motif. 3 residues coordinate Zn(2+): Cys209, His234, and Glu238. A 'KMSKS' region motif is present at residues 266–270 (KMSKS). Lys269 contacts ATP.

It belongs to the class-I aminoacyl-tRNA synthetase family. Requires Zn(2+) as cofactor.

It localises to the cytoplasm. The enzyme catalyses tRNA(Cys) + L-cysteine + ATP = L-cysteinyl-tRNA(Cys) + AMP + diphosphate. The protein is Cysteine--tRNA ligase of Saccharolobus solfataricus (strain ATCC 35092 / DSM 1617 / JCM 11322 / P2) (Sulfolobus solfataricus).